Consider the following 194-residue polypeptide: H-N-H endonuclease F-TflI (194 aa).

In terms of biological role, endonuclease that cleaves only one strand of asymmetric DNA substrates thereby introducing interruptions into the template or coding strand. This Escherichia coli (Enterobacteria phage T5) protein is H-N-H endonuclease F-TflI.